A 172-amino-acid chain; its full sequence is Small ribosomal subunit protein bS16 (172 aa).

The disordered stretch occupies residues 125–172 (KKRKAKEEAEAKAAAEKAAEEAAAAEAAKAEEEAAKAEEADSAEESAE). Basic and acidic residues-rich tracts occupy residues 129–144 (AKEEAEAKAAAEKAAE) and 152–163 (AKAEEEAAKAEE).

The protein belongs to the bacterial ribosomal protein bS16 family.

The polypeptide is Small ribosomal subunit protein bS16 (Corynebacterium aurimucosum (strain ATCC 700975 / DSM 44827 / CIP 107346 / CN-1) (Corynebacterium nigricans)).